Reading from the N-terminus, the 418-residue chain is AP-1 complex subunit mu (418 aa).

Residues 176-417 (NNEAYFDVTE…VTKAGKFQVR (242 aa)) form the MHD domain.

This sequence belongs to the adaptor complexes medium subunit family. Adaptor protein complex 1 (AP-1) is a heterotetramer composed of two large adaptins (gamma- and beta'-type subunits), a medium adaptin (mu-type subunit AP47) and a small adaptin (sigma-type subunit AP19). Regulated by phosphorylation.

Its subcellular location is the golgi apparatus. The protein resides in the cytoplasmic vesicle. It localises to the clathrin-coated vesicle membrane. Functionally, component of the adapter complexes which link clathrin to receptors in coated vesicles. Clathrin-associated protein complexes are believed to interact with the cytoplasmic tails of membrane proteins, leading to their selection and concentration. AP47 is a subunit of the plasma membrane adapter. In Diplobatis ommata (Ocellated electric ray), this protein is AP-1 complex subunit mu.